A 444-amino-acid polypeptide reads, in one-letter code: Beta-D-glucosyl crocetin beta-1,6-glucosyltransferase (444 aa).

The active-site Proton acceptor is His9. His9 contacts an anthocyanidin. Asp108 serves as the catalytic Charge relay. The UDP-alpha-D-glucose site is built by Thr130, Ala319, Gln321, His336, Trp339, Asn340, Ser341, Glu344, Asp360, and Gln361.

The protein belongs to the UDP-glycosyltransferase family. Ubiquitous.

It catalyses the reaction beta-D-glucosyl crocetin + UDP-alpha-D-glucose = beta-D-gentiobiosyl crocetin + UDP + H(+). The enzyme catalyses bis(beta-D-glucosyl) crocetin + UDP-alpha-D-glucose = beta-D-gentiobiosyl beta-D-glucosyl crocetin + UDP + H(+). The catalysed reaction is beta-D-gentiobiosyl beta-D-glucosyl crocetin + UDP-alpha-D-glucose = bis(beta-D-gentiobiosyl) crocetin + UDP + H(+). Its function is as follows. Glucosyltransferase catalyzing the beta 1-6 glucosylation of the sugar moiety of crocetin glucosyl esters to produce crocetin gentiobiosyl esters. Weak activity toward curcumin glucosides, but no activity with flavonoid glucosides, coumarin glucosides, 4-nitrophenyl glucoside or crocetin. Involved with UGT75L6 in sequential glycosylation of crocetin to crocin (bis(beta-D-gentiobiosyl) crocetin). The polypeptide is Beta-D-glucosyl crocetin beta-1,6-glucosyltransferase (UGT94E5) (Gardenia jasminoides (Cape jasmine)).